The primary structure comprises 400 residues: Pyruvate dehydrogenase E1 component subunit beta-4, chloroplastic (400 aa).

Residues 1–34 (MAAASSLHAAPRVGSSSSFSSSSSAGRRSASAAR) are disordered. The N-terminal 57 residues, 1-57 (MAAASSLHAAPRVGSSSSFSSSSSAGRRSASAARSVRVAAAAGSCAARRAGGRMVAR), are a transit peptide targeting the chloroplast. The span at 9–34 (AAPRVGSSSSFSSSSSAGRRSASAAR) shows a compositional bias: low complexity. E136 is a binding site for thiamine diphosphate. 4 residues coordinate K(+): I189, A237, I238, and N242.

Tetramer of 2 alpha and 2 beta subunits. Thiamine diphosphate serves as cofactor.

Its subcellular location is the plastid. The protein resides in the chloroplast. The catalysed reaction is N(6)-[(R)-lipoyl]-L-lysyl-[protein] + pyruvate + H(+) = N(6)-[(R)-S(8)-acetyldihydrolipoyl]-L-lysyl-[protein] + CO2. Its function is as follows. The pyruvate dehydrogenase complex catalyzes the overall conversion of pyruvate to acetyl-CoA and CO(2). It contains multiple copies of three enzymatic components: pyruvate dehydrogenase (E1), dihydrolipoamide acetyltransferase (E2) and lipoamide dehydrogenase (E3). This is Pyruvate dehydrogenase E1 component subunit beta-4, chloroplastic from Oryza sativa subsp. japonica (Rice).